Reading from the N-terminus, the 448-residue chain is MMDVNSSGRPDLYGHLRSLILPEVGRGLQDLSPDGGAHPVVSSWMPHLLSGFLEVTASPAPTWDAPPDNVSGCGEQINYGRVEKVVIGSILTLITLLTIAGNCLVVISVCFVKKLRQPSNYLIVSLALADLSVAVAVMPFVSVTDLIGGKWIFGHFFCNVFIAMDVMCCTASIMTLCVISIDRYLGITRPLTYPVRQNGKCMAKMILSVWLLSASITLPPLFGWAQNVNDDKVCLISQDFGYTIYSTAVAFYIPMSVMLFMYYQIYKAARKSAAKHKFPGFPRVQPESVISLNGVVKLQKEVEECANLSRLLKHERKNISIFKREQKAATTLGIIVGAFTVCWLPFFLLSTARPFICGTSCSCIPLWVERTCLWLGYANSLINPFIYAFFNRDLRTTYRSLLQCQYRNINRKLSAAGMHEALKLAERPERSEFVLQNSDHCGKKGHDT.

Residues 1–86 (MMDVNSSGRP…INYGRVEKVV (86 aa)) are Extracellular-facing. N-linked (GlcNAc...) asparagine glycosylation is found at Asn5 and Asn69. The chain crosses the membrane as a helical span at residues 87–111 (IGSILTLITLLTIAGNCLVVISVCF). The Cytoplasmic segment spans residues 112-121 (VKKLRQPSNY). The helical transmembrane segment at 122–143 (LIVSLALADLSVAVAVMPFVSV) threads the bilayer. Topologically, residues 144–155 (TDLIGGKWIFGH) are extracellular. The chain crosses the membrane as a helical span at residues 156–181 (FFCNVFIAMDVMCCTASIMTLCVISI). The cysteines at positions 158 and 234 are disulfide-linked. Asp165 provides a ligand contact to serotonin. Over 182-201 (DRYLGITRPLTYPVRQNGKC) the chain is Cytoplasmic. Residues 202–222 (MAKMILSVWLLSASITLPPLF) form a helical membrane-spanning segment. The Extracellular segment spans residues 223 to 240 (GWAQNVNDDKVCLISQDF). The helical transmembrane segment at 241–263 (GYTIYSTAVAFYIPMSVMLFMYY) threads the bilayer. Topologically, residues 264 to 329 (QIYKAARKSA…SIFKREQKAA (66 aa)) are cytoplasmic. A helical transmembrane segment spans residues 330–355 (TTLGIIVGAFTVCWLPFFLLSTARPF). Residues 356-366 (ICGTSCSCIPL) lie on the Extracellular side of the membrane. Residues 367–390 (WVERTCLWLGYANSLINPFIYAFF) form a helical membrane-spanning segment. Residues 391–448 (NRDLRTTYRSLLQCQYRNINRKLSAAGMHEALKLAERPERSEFVLQNSDHCGKKGHDT) lie on the Cytoplasmic side of the membrane. The S-palmitoyl cysteine moiety is linked to residue Cys404.

Belongs to the G-protein coupled receptor 1 family. As to expression, thalamus, hypothalamus, and the hippocampal rudiments.

The protein localises to the cell membrane. Its function is as follows. G-protein coupled receptor for 5-hydroxytryptamine (serotonin), a biogenic hormone that functions as a neurotransmitter, a hormone and a mitogen. Ligand binding causes a conformation change that triggers signaling via guanine nucleotide-binding proteins (G proteins) and modulates the activity of downstream effectors. HTR7 is coupled to G(s) G alpha proteins and mediates activation of adenylate cyclase activity. In Rattus norvegicus (Rat), this protein is 5-hydroxytryptamine receptor 7.